The following is a 555-amino-acid chain: Polypyrimidine tract-binding protein 1 (555 aa).

At Met1 the chain carries N-acetylmethionine. Ser16 carries the phosphoserine modification. 3 consecutive RRM domains span residues 58-142 (RVIH…SSPN), 183-259 (LRII…FSKL), and 361-412 (SVLL…SQAQ). Lys64 is covalently cross-linked (Glycyl lysine isopeptide (Lys-Gly) (interchain with G-Cter in SUMO2)). Phosphotyrosine is present on Tyr126. Position 137 is a phosphothreonine (Thr137). Ser140 carries the phosphoserine modification. Lys217 participates in a covalent cross-link: Glycyl lysine isopeptide (Lys-Gly) (interchain with G-Cter in SUMO2). Positions 435–457 (HQSVQLPREGQEDQGLTKDYGSS) are disordered. Ser457 is modified (phosphoserine). One can recognise an RRM 4 domain in the interval 478–553 (ATLHLSNIPP…HHLRVSFSKS (76 aa)).

As to quaternary structure, monomer. Part of a ternary complex containing KHSRP, PTBP1, PTBP2 and HNRPH1. Interacts with SFPQ. Interacts with RAVER1. Interacts with IVNS1ABP (via BACK domain); the interaction is direct. Expressed in myoblast; expression gradually decreases during muscle cell differentiation (at protein level).

Its subcellular location is the nucleus. Functionally, plays a role in pre-mRNA splicing and in the regulation of alternative splicing events. Activates exon skipping of its own pre-mRNA during muscle cell differentiation. Binds to the polypyrimidine tract of introns. May promote RNA looping when bound to two separate polypyrimidine tracts in the same pre-mRNA. May promote the binding of U2 snRNP to pre-mRNA. Cooperates with RAVER1 to modulate switching between mutually exclusive exons during maturation of the TPM1 pre-mRNA. Represses the splicing of MAPT/Tau exon 10. Binds to polypyrimidine-rich controlling element (PCE) of CFTR and promotes exon skipping of CFTR exon 9, thereby antagonizing TIA1 and its role in exon inclusion of CFTR exon 9. Plays a role in the splicing of pyruvate kinase PKM by binding repressively to a polypyrimidine tract flanking PKM exon 9, inhibiting exon 9 inclusion and resulting in exon 10 inclusion and production of the PKM M2 isoform. This is Polypyrimidine tract-binding protein 1 (Ptbp1) from Mus musculus (Mouse).